A 246-amino-acid polypeptide reads, in one-letter code: 2-aminoethylphosphonate cytidylyltransferase (246 aa).

Positions 19, 20, 34, 97, 114, and 115 each coordinate CMP-(2-aminoethyl)phosphonate. Mg(2+) contacts are provided by aspartate 116 and aspartate 145. Aspartate 145, lysine 161, and aspartate 202 together coordinate CMP-(2-aminoethyl)phosphonate. Glutamate 226 and aspartate 228 together coordinate Mg(2+).

This sequence belongs to the LicC/PntC cytidylyltransferase family. As to quaternary structure, monomer. The cofactor is Mg(2+).

It catalyses the reaction (2-aminoethyl)phosphonate + CTP = CMP-(2-aminoethyl)phosphonate + diphosphate. It participates in phosphorus metabolism; phosphonate biosynthesis. Its function is as follows. Cytidylyltransferase involved in the biosynthesis of cell-surface phosphonates. Catalyzes the activation of 2-aminoethylphosphonate (AEP) to CMP-2-aminoethylphosphonate (CMP-AEP). Can also use phosphocholine, with much lower efficiency. Exhibits strong activity towards CTP, limited activity towards ATP and no activity with GTP. In Lancefieldella rimae (strain ATCC 49626 / DSM 7090 / CCUG 31168 / NBRC 15546 / VPI D140H-11A) (Atopobium rimae), this protein is 2-aminoethylphosphonate cytidylyltransferase.